The following is a 69-amino-acid chain: Guanine nucleotide-binding protein G(I)/G(S)/G(O) subunit gamma-T2 (69 aa).

The segment at 47–69 (DPLLKGIPEDKNPFKEKGGCMIS) is disordered. Over residues 53–69 (IPEDKNPFKEKGGCMIS) the composition is skewed to basic and acidic residues. Position 66 is a cysteine methyl ester (Cys-66). Cys-66 is lipidated: S-farnesyl cysteine. A propeptide spans 67 to 69 (MIS) (removed in mature form).

This sequence belongs to the G protein gamma family. G proteins are composed of 3 units, alpha, beta and gamma.

Its subcellular location is the cell membrane. Functionally, guanine nucleotide-binding proteins (G proteins) are involved as a modulator or transducer in various transmembrane signaling systems. The beta and gamma chains are required for the GTPase activity, for replacement of GDP by GTP, and for G protein-effector interaction. This is Guanine nucleotide-binding protein G(I)/G(S)/G(O) subunit gamma-T2 (GNGT2) from Canis lupus familiaris (Dog).